Consider the following 261-residue polypeptide: Glutathione S-transferase theta-1 (261 aa).

Residues 2–101 (GLELYLDLLS…YLSRKYNTPD (100 aa)) enclose the GST N-terminal domain. Residues 72-73 (KV) and 85-86 (EC) contribute to the glutathione site. Residues 107–248 (DIKKRAQVDE…LSNIQIDPQL (142 aa)) enclose the GST C-terminal domain.

Belongs to the GST superfamily. Theta family. In terms of assembly, homodimer.

The protein localises to the cytoplasm. It carries out the reaction RX + glutathione = an S-substituted glutathione + a halide anion + H(+). Conjugation of reduced glutathione to a wide number of exogenous and endogenous hydrophobic electrophiles. This Gallus gallus (Chicken) protein is Glutathione S-transferase theta-1 (GSTT1).